Here is an 83-residue protein sequence, read N- to C-terminus: Gene 41 protein (83 aa).

This Mycobacterium phage L5 (Mycobacteriophage L5) protein is Gene 41 protein (41).